The following is a 791-amino-acid chain: Probable potassium transporter 11 (791 aa).

At 1-49 the chain is on the cytoplasmic side; it reads MASLSESEGTNRGSMWELDQNLDQPMDEEASRLKNMYREKKFSSLLLLR. The chain crosses the membrane as a helical span at residues 50–70; it reads LAFQSLGVVFGDLGTSPLYVF. Residues 71-87 lie on the Extracellular side of the membrane; sequence YNAFPHGVDDEEDVIGA. The helical transmembrane segment at 88–108 threads the bilayer; it reads LSLIIYTLTLIPLLKYVFVVL. At 109-175 the chain is on the cytoplasmic side; it reads RANDNGQGGT…EAHAYKRNCL (67 aa). Residues 176–196 form a helical membrane-spanning segment; sequence LIVVLIGTCTAIGDGILTPAI. The Extracellular segment spans residues 197 to 215; it reads SVLSASGGIKVQNPNMSTD. N-linked (GlcNAc...) asparagine glycosylation is present at Asn-211. The helical transmembrane segment at 216–236 threads the bilayer; sequence VVVIVSVIILIGLFSMQHYGT. Residues 237 to 238 lie on the Cytoplasmic side of the membrane; that stretch reads DK. Residues 239–259 form a helical membrane-spanning segment; it reads VGWLFAPIVLLWFILIGSVGA. Residues 260–289 are Extracellular-facing; sequence LNIHKYKGSVLKAYNPVYIYRYFQRRNSDS. Residues 290 to 310 traverse the membrane as a helical segment; sequence WASLGGIMLSITGTEALFADL. Topologically, residues 311 to 315 are cytoplasmic; it reads CHFPV. A helical membrane pass occupies residues 316-338; the sequence is FAIQIAFTLIVFPCLLLAYTGQA. At 339–359 the chain is on the extracellular side; it reads AYIIAHKDHVADAFYRSIPDS. The chain crosses the membrane as a helical span at residues 360 to 380; sequence IYWPAFVIATAAAIVASQATI. The Cytoplasmic segment spans residues 381–411; that stretch reads SATYSIIKQALALGCFPRVKIVHTSKKFLGQ. Residues 412-432 form a helical membrane-spanning segment; that stretch reads IYIPDINWVLLILCIAVTAGF. At 433–444 the chain is on the extracellular side; the sequence is KNQSQIGNAYGT. Asn-434 carries N-linked (GlcNAc...) asparagine glycosylation. Residues 445-465 form a helical membrane-spanning segment; the sequence is AVVIVMLVTTFLMVPIMLLVW. Over 466–468 the chain is Cytoplasmic; it reads KSH. The helical transmembrane segment at 469–489 threads the bilayer; that stretch reads WILVVTFIVLSLMVEIPYFSA. Topologically, residues 490–496 are extracellular; it reads CLLKIDQ. Residues 497-517 form a helical membrane-spanning segment; that stretch reads GGWVPLVIATAFFIIMYVWHF. Residues 518–791 are Cytoplasmic-facing; it reads CTVKRYEFEM…LLNVGQIYYI (274 aa).

It belongs to the HAK/KUP transporter (TC 2.A.72.3) family.

The protein resides in the membrane. In terms of biological role, high-affinity potassium transporter. This Oryza sativa subsp. japonica (Rice) protein is Probable potassium transporter 11.